Here is a 404-residue protein sequence, read N- to C-terminus: MKKGDVKKVVLAYSGGLDTSIILRWLQDEYDCEVVTFTADIGQGEELEPARQKAEMMGIKEIYIEDLREEFVRDYVFPMFRANTLYEGVYLLGTSIARPLIGKRLVEIAEATGADAVSHGATGKGNDQVRFELTAYALKPDIKIIAPWRTWDLHSRTKLIEYAMRHQIPVPKDKHGEAPYSMDANLLHISYEGKALENPWTEPSEDMFRLTVSPEAAPDKAQYIEVDFERGDAVAIDGEKLTPAALLAKLNEIGGRHGVGRLDLVENRYVGMKSRGVYETPGGTILQVAHRAVESLTLDREVMHLRDELMPRYAKLIYNGFWFAPERLMLQAAIDQTQQTVTGTARLKLYKGNVSVVGRKAAKSLYRMDYVTFEEDTVYDQHDAEGFIKLNALRLRLGKMARDS.

Residues 12-20 (AYSGGLDTS) and Ala39 each bind ATP. Positions 90 and 95 each coordinate L-citrulline. ATP is bound at residue Gly120. The L-aspartate site is built by Thr122, Asn126, and Asp127. L-citrulline is bound at residue Asn126. 5 residues coordinate L-citrulline: Arg130, Ser181, Ser190, Glu266, and Tyr278.

It belongs to the argininosuccinate synthase family. Type 1 subfamily. As to quaternary structure, homotetramer.

The protein localises to the cytoplasm. The enzyme catalyses L-citrulline + L-aspartate + ATP = 2-(N(omega)-L-arginino)succinate + AMP + diphosphate + H(+). The protein operates within amino-acid biosynthesis; L-arginine biosynthesis; L-arginine from L-ornithine and carbamoyl phosphate: step 2/3. The protein is Argininosuccinate synthase of Rhodospirillum rubrum (strain ATCC 11170 / ATH 1.1.1 / DSM 467 / LMG 4362 / NCIMB 8255 / S1).